The primary structure comprises 361 residues: Histidinol-phosphate aminotransferase (361 aa).

K219 carries the N6-(pyridoxal phosphate)lysine modification.

It belongs to the class-II pyridoxal-phosphate-dependent aminotransferase family. Histidinol-phosphate aminotransferase subfamily. In terms of assembly, homodimer. Requires pyridoxal 5'-phosphate as cofactor.

It catalyses the reaction L-histidinol phosphate + 2-oxoglutarate = 3-(imidazol-4-yl)-2-oxopropyl phosphate + L-glutamate. It functions in the pathway amino-acid biosynthesis; L-histidine biosynthesis; L-histidine from 5-phospho-alpha-D-ribose 1-diphosphate: step 7/9. The chain is Histidinol-phosphate aminotransferase from Cereibacter sphaeroides (strain ATCC 17023 / DSM 158 / JCM 6121 / CCUG 31486 / LMG 2827 / NBRC 12203 / NCIMB 8253 / ATH 2.4.1.) (Rhodobacter sphaeroides).